Consider the following 495-residue polypeptide: NADP/NAD-dependent aldehyde dehydrogenase PuuC (495 aa).

An NAD(+)-binding site is contributed by 244 to 249; that stretch reads GSTRTG. Catalysis depends on residues glutamate 267 and cysteine 302.

This sequence belongs to the aldehyde dehydrogenase family.

The catalysed reaction is an aldehyde + NADP(+) + H2O = a carboxylate + NADPH + 2 H(+). The enzyme catalyses an aldehyde + NAD(+) + H2O = a carboxylate + NADH + 2 H(+). It catalyses the reaction 4-(gamma-L-glutamylamino)butanal + NADP(+) + H2O = 4-(gamma-L-glutamylamino)butanoate + NADPH + 2 H(+). It carries out the reaction 4-(gamma-L-glutamylamino)butanal + NAD(+) + H2O = 4-(gamma-L-glutamylamino)butanoate + NADH + 2 H(+). Its pathway is amine and polyamine degradation; putrescine degradation; 4-aminobutanoate from putrescine: step 3/4. Lithium ions exhibits the highest inhibition (97%). To a lesser extent (5-20%), potassium, sodium, and ammonium ions also inhibit PuuC activity. Transition metals, such as copper and zinc ions inhibit PuuC activity by more than 90%. The presence of heavy metals (mercury, silver) or sodium hydrogensulfite in the reaction mixture completely inactivate PuuC; in contrast, disulfide reductants such as DTT and 2-mercaptoethanol significantly increase its activity by 75% and 27%, respectively. Its function is as follows. Catalyzes the oxidation of 3-hydroxypropionaldehyde (3-HPA) to 3-hydroxypropionic acid (3-HP). It acts preferentially with NAD but can also use NADP. 3-HPA appears to be the most suitable substrate for PuuC followed by isovaleraldehyde, propionaldehyde, butyraldehyde, and valeraldehyde. It might play a role in propionate and/or acetic acid metabolisms. Also involved in the breakdown of putrescine through the oxidation of gamma-Glu-gamma-aminobutyraldehyde to gamma-Glu-gamma-aminobutyrate (gamma-Glu-GABA). The protein is NADP/NAD-dependent aldehyde dehydrogenase PuuC of Escherichia coli (strain K12).